Reading from the N-terminus, the 311-residue chain is R2-like ligand binding oxidase (311 aa).

The Mn(2+) site is built by Glu68, Glu101, and His104. The 3-(O4'-tyrosyl)-valine (Val-Tyr) cross-link spans 71 to 162 (VTQDIQPFMA…AAQVRASVTY (92 aa)). A Fe cation-binding site is contributed by Glu101. 3 residues coordinate Fe cation: Glu167, Glu202, and His205.

This sequence belongs to the ribonucleoside diphosphate reductase small chain family. R2-like ligand binding oxidase subfamily. In terms of assembly, homodimer. It depends on Fe cation as a cofactor. Mn(2+) serves as cofactor.

Functionally, probable oxidase that might be involved in lipid metabolism. The chain is R2-like ligand binding oxidase from Mycobacterium avium (strain 104).